The chain runs to 496 residues: Glycerol kinase (496 aa).

Thr-12 contributes to the ADP binding site. ATP-binding residues include Thr-12, Thr-13, and Ser-14. Thr-12 is a binding site for sn-glycerol 3-phosphate. An ADP-binding site is contributed by Arg-16. Sn-glycerol 3-phosphate contacts are provided by Arg-82, Glu-83, and Tyr-134. The glycerol site is built by Arg-82, Glu-83, and Tyr-134. The residue at position 230 (His-230) is a Phosphohistidine; by HPr. Asp-244 serves as a coordination point for sn-glycerol 3-phosphate. Residues Asp-244 and Gln-245 each contribute to the glycerol site. ADP contacts are provided by Thr-266 and Gly-309. 4 residues coordinate ATP: Thr-266, Gly-309, Gln-313, and Gly-410. 2 residues coordinate ADP: Gly-410 and Asn-414.

Belongs to the FGGY kinase family. As to quaternary structure, homotetramer and homodimer (in equilibrium). The phosphoenolpyruvate-dependent sugar phosphotransferase system (PTS), including enzyme I, and histidine-containing protein (HPr) are required for the phosphorylation, which leads to the activation of the enzyme.

It catalyses the reaction glycerol + ATP = sn-glycerol 3-phosphate + ADP + H(+). It participates in polyol metabolism; glycerol degradation via glycerol kinase pathway; sn-glycerol 3-phosphate from glycerol: step 1/1. Its activity is regulated as follows. Activated by phosphorylation and inhibited by fructose 1,6-bisphosphate (FBP). Functionally, key enzyme in the regulation of glycerol uptake and metabolism. Catalyzes the phosphorylation of glycerol to yield sn-glycerol 3-phosphate. This is Glycerol kinase from Bacillus anthracis (strain A0248).